A 484-amino-acid chain; its full sequence is RxLR effector protein PexRD18 (484 aa).

The N-terminal stretch at Met-1–Ala-20 is a signal peptide. Positions Arg-55–Arg-79 match the RxLR-dEER motif.

This sequence belongs to the RxLR effector family.

It is found in the secreted. The protein localises to the host cell membrane. In terms of biological role, effector that enhances P.infestans colonization of Nicotiana benthamiana leaves. The polypeptide is RxLR effector protein PexRD18 (Phytophthora infestans (strain T30-4) (Potato late blight agent)).